Here is a 150-residue protein sequence, read N- to C-terminus: S-protein homolog 24 (150 aa).

An N-linked (GlcNAc...) asparagine glycan is attached at Asn122.

It belongs to the plant self-incompatibility (S1) protein family.

Its subcellular location is the secreted. This is S-protein homolog 24 from Arabidopsis thaliana (Mouse-ear cress).